Consider the following 211-residue polypeptide: Large ribosomal subunit protein bL17c (211 aa).

Residues 1–95 constitute a chloroplast transit peptide; it reads MAIPMSMAMA…IVDGGGRIYA (95 aa).

Belongs to the bacterial ribosomal protein bL17 family. Part of the 50S ribosomal subunit.

The protein localises to the plastid. It is found in the chloroplast. In terms of biological role, this protein binds directly to 23S ribosomal RNA. In Arabidopsis thaliana (Mouse-ear cress), this protein is Large ribosomal subunit protein bL17c (RPL17).